A 66-amino-acid chain; its full sequence is Putative antitoxin APE_0279a.1 (66 aa).

This sequence belongs to the UPF0165 family.

Its function is as follows. Possibly the antitoxin component of a type II toxin-antitoxin (TA) system. The sequence is that of Putative antitoxin APE_0279a.1 from Aeropyrum pernix (strain ATCC 700893 / DSM 11879 / JCM 9820 / NBRC 100138 / K1).